Reading from the N-terminus, the 224-residue chain is ATP-dependent dethiobiotin synthetase BioD (224 aa).

12-17 (GVGKTF) contacts ATP. Threonine 16 lines the Mg(2+) pocket. Lysine 37 is an active-site residue. Threonine 41 serves as a coordination point for substrate. Residues asparagine 52, 107–110 (EGAG), 167–168 (GS), 197–199 (PEG), and glutamate 204 contribute to the ATP site. Mg(2+) contacts are provided by asparagine 52 and glutamate 107.

This sequence belongs to the dethiobiotin synthetase family. In terms of assembly, homodimer. Mg(2+) is required as a cofactor.

The protein localises to the cytoplasm. The catalysed reaction is (7R,8S)-7,8-diammoniononanoate + CO2 + ATP = (4R,5S)-dethiobiotin + ADP + phosphate + 3 H(+). It participates in cofactor biosynthesis; biotin biosynthesis; biotin from 7,8-diaminononanoate: step 1/2. Its function is as follows. Catalyzes a mechanistically unusual reaction, the ATP-dependent insertion of CO2 between the N7 and N8 nitrogen atoms of 7,8-diaminopelargonic acid (DAPA, also called 7,8-diammoniononanoate) to form a ureido ring. The chain is ATP-dependent dethiobiotin synthetase BioD from Corynebacterium glutamicum (strain ATCC 13032 / DSM 20300 / JCM 1318 / BCRC 11384 / CCUG 27702 / LMG 3730 / NBRC 12168 / NCIMB 10025 / NRRL B-2784 / 534).